The primary structure comprises 166 residues: Photosystem I assembly protein Ycf3 (166 aa).

TPR repeat units follow at residues 35-68 (AFTY…EIDP), 72-105 (SYIL…NPSL), and 120-153 (GEQA…APTN).

It belongs to the Ycf3 family.

It is found in the plastid. Its subcellular location is the chloroplast thylakoid membrane. Its function is as follows. Essential for the assembly of the photosystem I (PSI) complex. May act as a chaperone-like factor to guide the assembly of the PSI subunits. The sequence is that of Photosystem I assembly protein Ycf3 from Oltmannsiellopsis viridis (Marine flagellate).